Consider the following 162-residue polypeptide: NADH-quinone oxidoreductase subunit I (162 aa).

2 4Fe-4S ferredoxin-type domains span residues 52–82 and 93–122; these read LRRYPNGEERCIACKLCEAICPAQAITIEAG and VRYDIDMVKCIYCGLCQEACPVDAIVEGPN. Positions 62, 65, 68, 72, 102, 105, 108, and 112 each coordinate [4Fe-4S] cluster.

It belongs to the complex I 23 kDa subunit family. As to quaternary structure, NDH-1 is composed of 14 different subunits. Subunits NuoA, H, J, K, L, M, N constitute the membrane sector of the complex. Requires [4Fe-4S] cluster as cofactor.

The protein localises to the cell inner membrane. It catalyses the reaction a quinone + NADH + 5 H(+)(in) = a quinol + NAD(+) + 4 H(+)(out). Functionally, NDH-1 shuttles electrons from NADH, via FMN and iron-sulfur (Fe-S) centers, to quinones in the respiratory chain. The immediate electron acceptor for the enzyme in this species is believed to be ubiquinone. Couples the redox reaction to proton translocation (for every two electrons transferred, four hydrogen ions are translocated across the cytoplasmic membrane), and thus conserves the redox energy in a proton gradient. The sequence is that of NADH-quinone oxidoreductase subunit I from Afipia carboxidovorans (strain ATCC 49405 / DSM 1227 / KCTC 32145 / OM5) (Oligotropha carboxidovorans).